A 373-amino-acid polypeptide reads, in one-letter code: MADSSERDAGKSAAAGACAVPKTKGRRVQGRRVVESRYLQYDKKAKKVSGAAKEEKPPEGRKASTVPRSREESQVMGTGNLQSTMLEGHGMNPPDLDLSAIDDKILSRKASWPDREMTDKAKSTSFISCDKKRILRKKRRDLQETMDMMESQTLLMTLLSVKMENNLALLEERAEKDLAAMCHEKERLQRQALELRRQLLLRQKHQELAATLDAQIEVLSPLQPVLERFKEEYMTLGRALDTTRHELPMQAVHMEGSGQELLDDLEPALRITLQLLGDLSICSPYATAQVQGASAQEPGASTQLSCLLKELKGLVTEKDLELRRLVSQVVELSSQASKEAALMNQEVWEEAEGALTSSQWYFSPDACRDDSPS.

Basic and acidic residues-rich tracts occupy residues 1 to 10 (MADSSERDAG), 32 to 43 (RVVESRYLQYDK), and 52 to 73 (AKEE…REES). A disordered region spans residues 1–76 (MADSSERDAG…PRSREESQVM (76 aa)). Residue Ala-2 is modified to N-acetylalanine. Ser-99 bears the Phosphoserine mark. Residues 130 to 204 (DKKRILRKKR…LRRQLLLRQK (75 aa)) are a coiled coil.

Belongs to the HAUS8 family. As to quaternary structure, component of the HAUS augmin-like complex. The complex interacts with the gamma-tubulin ring complex and this interaction is required for spindle assembly. Associates with microtubules. The interaction with microtubules is strong during mitosis, while it is weak or absent during interphase. It is unclear whether this interaction is direct or indirect. Interacts with EML3 (phosphorylated at 'Thr-882') and TUBG1.

It is found in the cytoplasm. The protein resides in the cytoskeleton. The protein localises to the microtubule organizing center. Its subcellular location is the centrosome. It localises to the spindle. It is found in the spindle pole. Functionally, contributes to mitotic spindle assembly, maintenance of centrosome integrity and completion of cytokinesis as part of the HAUS augmin-like complex. This is HAUS augmin-like complex subunit 8 (Haus8) from Mus musculus (Mouse).